A 457-amino-acid chain; its full sequence is Siroheme synthase 2 (457 aa).

Positions M1–T204 are precorrin-2 dehydrogenase /sirohydrochlorin ferrochelatase. NAD(+) is bound by residues D22–V23 and L43–A44. Residue S128 is modified to Phosphoserine. The interval G216 to K457 is uroporphyrinogen-III C-methyltransferase. Residue P225 participates in S-adenosyl-L-methionine binding. The Proton acceptor role is filled by D248. K270 serves as the catalytic Proton donor. S-adenosyl-L-methionine-binding positions include G301–D303, I306, T331–A332, M382, and G411.

In the N-terminal section; belongs to the precorrin-2 dehydrogenase / sirohydrochlorin ferrochelatase family. The protein in the C-terminal section; belongs to the precorrin methyltransferase family.

It carries out the reaction uroporphyrinogen III + 2 S-adenosyl-L-methionine = precorrin-2 + 2 S-adenosyl-L-homocysteine + H(+). The catalysed reaction is precorrin-2 + NAD(+) = sirohydrochlorin + NADH + 2 H(+). The enzyme catalyses siroheme + 2 H(+) = sirohydrochlorin + Fe(2+). It functions in the pathway cofactor biosynthesis; adenosylcobalamin biosynthesis; precorrin-2 from uroporphyrinogen III: step 1/1. It participates in cofactor biosynthesis; adenosylcobalamin biosynthesis; sirohydrochlorin from precorrin-2: step 1/1. Its pathway is porphyrin-containing compound metabolism; siroheme biosynthesis; precorrin-2 from uroporphyrinogen III: step 1/1. The protein operates within porphyrin-containing compound metabolism; siroheme biosynthesis; siroheme from sirohydrochlorin: step 1/1. It functions in the pathway porphyrin-containing compound metabolism; siroheme biosynthesis; sirohydrochlorin from precorrin-2: step 1/1. Multifunctional enzyme that catalyzes the SAM-dependent methylations of uroporphyrinogen III at position C-2 and C-7 to form precorrin-2 via precorrin-1. Then it catalyzes the NAD-dependent ring dehydrogenation of precorrin-2 to yield sirohydrochlorin. Finally, it catalyzes the ferrochelation of sirohydrochlorin to yield siroheme. The protein is Siroheme synthase 2 of Cronobacter sakazakii (strain ATCC BAA-894) (Enterobacter sakazakii).